Consider the following 318-residue polypeptide: DNA-directed RNA polymerase subunit alpha 2 (318 aa).

The alpha N-terminal domain (alpha-NTD) stretch occupies residues 1 to 227 (MALENLLHPT…NQLRNILDIE (227 aa)). The tract at residues 242 to 318 (INPILLKHVE…TLIENWPQDL (77 aa)) is alpha C-terminal domain (alpha-CTD).

It belongs to the RNA polymerase alpha chain family. As to quaternary structure, homodimer. The RNAP catalytic core consists of 2 alpha, 1 beta, 1 beta' and 1 omega subunit. When a sigma factor is associated with the core the holoenzyme is formed, which can initiate transcription.

It catalyses the reaction RNA(n) + a ribonucleoside 5'-triphosphate = RNA(n+1) + diphosphate. Its function is as follows. DNA-dependent RNA polymerase catalyzes the transcription of DNA into RNA using the four ribonucleoside triphosphates as substrates. The sequence is that of DNA-directed RNA polymerase subunit alpha 2 from Francisella tularensis subsp. tularensis (strain FSC 198).